A 370-amino-acid polypeptide reads, in one-letter code: Putative glutamate--cysteine ligase 2 (370 aa).

Belongs to the glutamate--cysteine ligase type 2 family. YbdK subfamily.

The catalysed reaction is L-cysteine + L-glutamate + ATP = gamma-L-glutamyl-L-cysteine + ADP + phosphate + H(+). In terms of biological role, ATP-dependent carboxylate-amine ligase which exhibits weak glutamate--cysteine ligase activity. The sequence is that of Putative glutamate--cysteine ligase 2 from Janthinobacterium sp. (strain Marseille) (Minibacterium massiliensis).